The sequence spans 89 residues: Cell division topological specificity factor (89 aa).

This sequence belongs to the MinE family.

In terms of biological role, prevents the cell division inhibition by proteins MinC and MinD at internal division sites while permitting inhibition at polar sites. This ensures cell division at the proper site by restricting the formation of a division septum at the midpoint of the long axis of the cell. The sequence is that of Cell division topological specificity factor from Edwardsiella ictaluri (strain 93-146).